The following is a 329-amino-acid chain: Malate dehydrogenase (329 aa).

G12–G18 contributes to the NAD(+) binding site. Residues R93 and R99 each contribute to the substrate site. Residues N106, Q113, and T130–N132 contribute to the NAD(+) site. Positions 132 and 163 each coordinate substrate. The Proton acceptor role is filled by H188.

The protein belongs to the LDH/MDH superfamily. MDH type 2 family.

The catalysed reaction is (S)-malate + NAD(+) = oxaloacetate + NADH + H(+). Catalyzes the reversible oxidation of malate to oxaloacetate. In Mycobacterium avium (strain 104), this protein is Malate dehydrogenase.